Consider the following 284-residue polypeptide: D-tagatose-1,6-bisphosphate aldolase subunit GatY (284 aa).

Residue Asp82 is the Proton donor of the active site. Zn(2+) contacts are provided by His83 and His180. Gly181 is a dihydroxyacetone phosphate binding site. His208 contacts Zn(2+). Dihydroxyacetone phosphate contacts are provided by residues 209-211 (GAS) and 230-233 (NVAT).

It belongs to the class II fructose-bisphosphate aldolase family. TagBP aldolase GatY subfamily. In terms of assembly, forms a complex with GatZ. Requires Zn(2+) as cofactor.

It carries out the reaction D-tagatofuranose 1,6-bisphosphate = D-glyceraldehyde 3-phosphate + dihydroxyacetone phosphate. Its pathway is carbohydrate metabolism; D-tagatose 6-phosphate degradation; D-glyceraldehyde 3-phosphate and glycerone phosphate from D-tagatose 6-phosphate: step 2/2. In terms of biological role, catalytic subunit of the tagatose-1,6-bisphosphate aldolase GatYZ, which catalyzes the reversible aldol condensation of dihydroxyacetone phosphate (DHAP or glycerone-phosphate) with glyceraldehyde 3-phosphate (G3P) to produce tagatose 1,6-bisphosphate (TBP). Requires GatZ subunit for full activity and stability. Is involved in the catabolism of galactitol. The chain is D-tagatose-1,6-bisphosphate aldolase subunit GatY (gatY) from Escherichia coli.